We begin with the raw amino-acid sequence, 730 residues long: Probable G-protein coupled receptor 149 (730 aa).

Over 1 to 34 (MSFFLSNLTNDSRLWKVSHNSTDLMNSPETLTLS) the chain is Extracellular. N-linked (GlcNAc...) asparagine glycosylation is found at Asn7, Asn10, and Asn20. Residues 35 to 55 (LFCLICLMTLVALVGSIFSLV) form a helical membrane-spanning segment. Residues 56-68 (SLLTMQYRTVVSM) are Cytoplasmic-facing. Residues 69–89 (LVTSWSVDDLLSVLSVAIFMV) traverse the membrane as a helical segment. Topologically, residues 90-108 (LQWPREAPGYFQSLCTTSA) are extracellular. The cysteines at positions 104 and 181 are disulfide-linked. The helical transmembrane segment at 109-131 (LLYMCQGLSSNLKATLIVFYNFY) threads the bilayer. The Cytoplasmic portion of the chain corresponds to 132 to 148 (TMHRTVVSQSSSWRSGQ). A helical membrane pass occupies residues 149–169 (VLGVALTVWAVSLLLASLPLC). Residues 170–188 (GWGVFVRTPWGCLTDCSSP) lie on the Extracellular side of the membrane. Residues 189–209 (YVLLLFAVYASAFGLLAVLSV) form a helical membrane-spanning segment. The Cytoplasmic portion of the chain corresponds to 210 to 308 (PLTHQLLCSE…SFPVSLAQKR (99 aa)). Residues 309–329 (FALILALTKVILWLPMMIHMV) form a helical membrane-spanning segment. At 330–340 (VKHVVGFQSLP) the chain is on the extracellular side. A helical transmembrane segment spans residues 341–361 (VDMLSFLLTLLASTVTPVFVL). At 362–730 (SKRWAHLPCG…RKREAESKGN (369 aa)) the chain is on the cytoplasmic side.

Belongs to the G-protein coupled receptor 1 family. In terms of tissue distribution, expressed exclusively in brain and testis.

Its subcellular location is the cell membrane. Functionally, orphan receptor. In Rattus norvegicus (Rat), this protein is Probable G-protein coupled receptor 149 (Gpr149).